Consider the following 364-residue polypeptide: NAD(P)H-quinone oxidoreductase subunit 1, chloroplastic (364 aa).

6 helical membrane passes run 27–47, 98–118, 127–147, 255–275, 301–321, and 337–357; these read IWLLVPIFTPVSGILIGVLVI, FSVGPSIAVISILLSYSVIPF, ISIGVFLWIAISSIAPIGLLM, GLFYVASYLNLLVSSLFVTVL, VFGSTIGILITLAKAYLFLFV, and LLNLGWKFLLPIALGNLLLTT.

The protein belongs to the complex I subunit 1 family. As to quaternary structure, NDH is composed of at least 16 different subunits, 5 of which are encoded in the nucleus.

It localises to the plastid. The protein localises to the chloroplast thylakoid membrane. The enzyme catalyses a plastoquinone + NADH + (n+1) H(+)(in) = a plastoquinol + NAD(+) + n H(+)(out). It carries out the reaction a plastoquinone + NADPH + (n+1) H(+)(in) = a plastoquinol + NADP(+) + n H(+)(out). Its function is as follows. NDH shuttles electrons from NAD(P)H:plastoquinone, via FMN and iron-sulfur (Fe-S) centers, to quinones in the photosynthetic chain and possibly in a chloroplast respiratory chain. The immediate electron acceptor for the enzyme in this species is believed to be plastoquinone. Couples the redox reaction to proton translocation, and thus conserves the redox energy in a proton gradient. The protein is NAD(P)H-quinone oxidoreductase subunit 1, chloroplastic of Illicium oligandrum (Star anise).